The chain runs to 431 residues: Glutamate-1-semialdehyde 2,1-aminomutase (431 aa).

N6-(pyridoxal phosphate)lysine is present on K265.

The protein belongs to the class-III pyridoxal-phosphate-dependent aminotransferase family. HemL subfamily. In terms of assembly, homodimer. The cofactor is pyridoxal 5'-phosphate.

It is found in the cytoplasm. It carries out the reaction (S)-4-amino-5-oxopentanoate = 5-aminolevulinate. It functions in the pathway porphyrin-containing compound metabolism; protoporphyrin-IX biosynthesis; 5-aminolevulinate from L-glutamyl-tRNA(Glu): step 2/2. This is Glutamate-1-semialdehyde 2,1-aminomutase from Vibrio vulnificus (strain YJ016).